The following is a 219-amino-acid chain: Ribose-5-phosphate isomerase A (219 aa).

Residues 28–31 (TGST), 81–84 (DGAD), and 94–97 (KGGG) contribute to the substrate site. E103 serves as the catalytic Proton acceptor. K121 contacts substrate.

Belongs to the ribose 5-phosphate isomerase family. In terms of assembly, homodimer.

It catalyses the reaction aldehydo-D-ribose 5-phosphate = D-ribulose 5-phosphate. It functions in the pathway carbohydrate degradation; pentose phosphate pathway; D-ribose 5-phosphate from D-ribulose 5-phosphate (non-oxidative stage): step 1/1. Catalyzes the reversible conversion of ribose-5-phosphate to ribulose 5-phosphate. The protein is Ribose-5-phosphate isomerase A of Pectobacterium carotovorum subsp. carotovorum (strain PC1).